The following is a 123-amino-acid chain: Small ribosomal subunit protein uS13 (123 aa).

The segment at Pro-97 to Lys-123 is disordered. The span at Gln-101 to Lys-123 shows a compositional bias: basic residues.

It belongs to the universal ribosomal protein uS13 family. Part of the 30S ribosomal subunit. Forms a loose heterodimer with protein S19. Forms two bridges to the 50S subunit in the 70S ribosome.

In terms of biological role, located at the top of the head of the 30S subunit, it contacts several helices of the 16S rRNA. In the 70S ribosome it contacts the 23S rRNA (bridge B1a) and protein L5 of the 50S subunit (bridge B1b), connecting the 2 subunits; these bridges are implicated in subunit movement. Contacts the tRNAs in the A and P-sites. The polypeptide is Small ribosomal subunit protein uS13 (Alkaliphilus oremlandii (strain OhILAs) (Clostridium oremlandii (strain OhILAs))).